Reading from the N-terminus, the 160-residue chain is Cytochrome b6-f complex subunit 4 (160 aa).

A run of 3 helical transmembrane segments spans residues 36 to 56, 95 to 115, and 131 to 151; these read LLYI…GLAV, LLGV…PFLE, and TVFL…TLPI.

It belongs to the cytochrome b family. PetD subfamily. In terms of assembly, the 4 large subunits of the cytochrome b6-f complex are cytochrome b6, subunit IV (17 kDa polypeptide, petD), cytochrome f and the Rieske protein, while the 4 small subunits are petG, petL, petM and petN. The complex functions as a dimer.

It localises to the plastid. Its subcellular location is the chloroplast thylakoid membrane. Functionally, component of the cytochrome b6-f complex, which mediates electron transfer between photosystem II (PSII) and photosystem I (PSI), cyclic electron flow around PSI, and state transitions. This chain is Cytochrome b6-f complex subunit 4, found in Oryza nivara (Indian wild rice).